Reading from the N-terminus, the 626-residue chain is Chaperone protein HtpG (626 aa).

Residues 1–332 (MTNNDTPGMR…TEDLPLNVSR (332 aa)) form an a; substrate-binding region. The segment at 333–546 (EVVQSSKVMA…KDSLDSSMEK (214 aa)) is b. A c region spans residues 547-626 (MMKMMHAEMP…ELIEAATMSR (80 aa)).

Belongs to the heat shock protein 90 family. In terms of assembly, homodimer.

It is found in the cytoplasm. Its function is as follows. Molecular chaperone. Has ATPase activity. The protein is Chaperone protein HtpG of Chlorobium phaeobacteroides (strain DSM 266 / SMG 266 / 2430).